The chain runs to 132 residues: Chemokine-like protein TAFA-5 (132 aa).

A signal peptide spans 1 to 43 (MAPSPRTGSRQDATALPSMSSTFWAFMILASLLIAYCSQLAAG). Residue Asn113 is glycosylated (N-linked (GlcNAc...) asparagine).

This sequence belongs to the TAFA family.

The protein localises to the secreted. In terms of biological role, acts as a chemokine-like protein by regulating cell proliferation and migration through activation of G protein-coupled receptors (GPCRs), such as S1PR2 and FPR2. Stimulates chemotactic migration of macrophages mediated by the MAPK3/ERK1 and AKT1 pathway. Blocks TNFSF11/RANKL-induced osteoclast formation from macrophages by inhibiting up-regulation of osteoclast fusogenic and differentiation genes. Stimulation of macrophage migration and inhibition of osteoclast formation is mediated through the GPCR FPR2. Acts as an adipokine by negatively regulating vascular smooth muscle cell (VSMC) proliferation and migration in response to platelet-derived growth factor stimulation via GPCR S1PR2 and G protein GNA12/GNA13-transmitted RHOA signaling. Inhibits injury-induced cell proliferation and neointima formation in the femoral arteries. This is Chemokine-like protein TAFA-5 (TAFA5) from Bos taurus (Bovine).